A 549-amino-acid polypeptide reads, in one-letter code: Probable protein kinase UbiB (549 aa).

The Protein kinase domain maps to 123–501 (DFDDVPLASA…QHKAHKSNYL (379 aa)). Residues 129–137 (LASASIAQV) and Lys-152 contribute to the ATP site. Catalysis depends on Asp-287, which acts as the Proton acceptor. A run of 2 helical transmembrane segments spans residues 498–517 (SNYL…ILFT) and 521–540 (TLWA…LLGW).

Belongs to the ABC1 family. UbiB subfamily.

The protein resides in the cell inner membrane. Its pathway is cofactor biosynthesis; ubiquinone biosynthesis [regulation]. Functionally, is probably a protein kinase regulator of UbiI activity which is involved in aerobic coenzyme Q (ubiquinone) biosynthesis. The sequence is that of Probable protein kinase UbiB from Shewanella denitrificans (strain OS217 / ATCC BAA-1090 / DSM 15013).